Reading from the N-terminus, the 181-residue chain is MMQPLYLVGPRGCGKTTIGMALAQATGFRFADTDRWLQSHVQMSVADIVEKEGWGGFRARETAALEAVSAPSTVVATGGGIILTEYNRRYMHRVGVVIYLCAPVSTLVNRLEAEPEADLRPTLTGKPLSEEVREVLEQRDALYRETAHYIIDATKTPAQVVSEIIAALPPSTQRLQGDVYT.

Residue 12-17 participates in ATP binding; sequence GCGKTT. Mg(2+)-binding residues include Thr-16 and Asp-32. Residues Asp-34, Arg-58, and Gly-79 each coordinate substrate. The segment at 112-126 is LID domain; it reads EAEPEADLRPTLTGK. Arg-120 serves as a coordination point for ATP. A substrate-binding site is contributed by Arg-139.

The protein belongs to the shikimate kinase family. AroL subfamily. In terms of assembly, monomer. It depends on Mg(2+) as a cofactor.

The protein localises to the cytoplasm. It catalyses the reaction shikimate + ATP = 3-phosphoshikimate + ADP + H(+). Its pathway is metabolic intermediate biosynthesis; chorismate biosynthesis; chorismate from D-erythrose 4-phosphate and phosphoenolpyruvate: step 5/7. Catalyzes the specific phosphorylation of the 3-hydroxyl group of shikimic acid using ATP as a cosubstrate. The polypeptide is Shikimate kinase 2 (Salmonella heidelberg (strain SL476)).